We begin with the raw amino-acid sequence, 209 residues long: MQIVASLTDPSQAATAQSQGADLLELRFDLMEGDPVDIARRCRAISKLPLIATFRSALEGGRYFGSPEEWAKKIAPVLPLVDYVDIEQQFARKSGLVREAGKAIIASHHTAEMLPLHVLFVLEQELRAYGDIPKIIVTPHNEDELIDLIAFTRAAKKPVCTGVMGSAFRYARAILPLFGSELAYCHAGVPAAEGQYSVAEFVALMKMLS.

Residues serine 6, 25–27 (ELR), and arginine 55 each bind 3-dehydroquinate. The Proton donor/acceptor role is filled by histidine 109. Catalysis depends on lysine 134, which acts as the Schiff-base intermediate with substrate. 3-dehydroquinate contacts are provided by arginine 172 and glutamine 195.

Belongs to the type-I 3-dehydroquinase family. As to quaternary structure, homodimer.

It carries out the reaction 3-dehydroquinate = 3-dehydroshikimate + H2O. Its pathway is metabolic intermediate biosynthesis; chorismate biosynthesis; chorismate from D-erythrose 4-phosphate and phosphoenolpyruvate: step 3/7. In terms of biological role, involved in the third step of the chorismate pathway, which leads to the biosynthesis of aromatic amino acids. Catalyzes the cis-dehydration of 3-dehydroquinate (DHQ) and introduces the first double bond of the aromatic ring to yield 3-dehydroshikimate. The protein is 3-dehydroquinate dehydratase of Methanoregula boonei (strain DSM 21154 / JCM 14090 / 6A8).